The following is a 127-amino-acid chain: Fluoride-specific ion channel FluC (127 aa).

A run of 4 helical transmembrane segments spans residues 8–28, 37–57, 68–88, and 100–120; these read LLIAFGGAIGSIFRYLLQYWF, PWGTLTANLLGSFLIGVVYAI, WKFLLASGFCGGFTTFSTFSY, and ILFLGYICLSVVGGIGFAFAG. Na(+) is bound by residues G78 and T81.

Belongs to the fluoride channel Fluc/FEX (TC 1.A.43) family.

Its subcellular location is the cell inner membrane. The enzyme catalyses fluoride(in) = fluoride(out). With respect to regulation, na(+) is not transported, but it plays an essential structural role and its presence is essential for fluoride channel function. Its function is as follows. Fluoride-specific ion channel. Important for reducing fluoride concentration in the cell, thus reducing its toxicity. This is Fluoride-specific ion channel FluC from Leptospira interrogans serogroup Icterohaemorrhagiae serovar copenhageni (strain Fiocruz L1-130).